Consider the following 449-residue polypeptide: MLSTMRPRLSLLLLRLLLLTKAAHTVGVPPRLCDVRRVLLEERAHCLQQLSKEKKGALGPETASGCEGLWDNMSCWPSSAPARTVEVQCPKFLLMLSNKNGSLFRNCTQDGWSETFPRPDLACGVNINNSFNERRHAYLLKLKVMYTVGYSSSLAMLLVALSILCSFRRLHCTRNYIHMHLFVSFILRALSNFIKDAVLFSSDDVTYCDAHKVGCKLVMIFFQYCIMANYAWLLVEGLYLHTLLAISFFSERKYLQAFVLLGWGSPAIFVALWAITRHFLENTGCWDINANASVWWVIRGPVILSILINFIFFINILRILMRKLRTQETRGSETNHYKRLAKSTLLLIPLFGIHYIVFAFSPEDAMEVQLFFELALGSFQGLVVAVLYCFLNGEVQLEVQKKWRQWHLQEFPLRPVAFNNSFSNATNGPTHSTKASTEQSRSIPRASII.

The first 25 residues, 1-25, serve as a signal peptide directing secretion; sequence MLSTMRPRLSLLLLRLLLLTKAAHT. The Extracellular segment spans residues 26–141; it reads VGVPPRLCDV…NERRHAYLLK (116 aa). Intrachain disulfides connect cysteine 46–cysteine 75, cysteine 66–cysteine 107, and cysteine 89–cysteine 123. Asparagine 72, asparagine 100, asparagine 106, and asparagine 128 each carry an N-linked (GlcNAc...) asparagine glycan. The helical transmembrane segment at 142-167 threads the bilayer; it reads LKVMYTVGYSSSLAMLLVALSILCSF. Residues 168–174 are Cytoplasmic-facing; sequence RRLHCTR. The helical transmembrane segment at 175 to 195 threads the bilayer; the sequence is NYIHMHLFVSFILRALSNFIK. Residues 196 to 216 are Extracellular-facing; it reads DAVLFSSDDVTYCDAHKVGCK. Cysteine 215 and cysteine 285 are joined by a disulfide. The chain crosses the membrane as a helical span at residues 217-239; sequence LVMIFFQYCIMANYAWLLVEGLY. Residues 240–254 are Cytoplasmic-facing; sequence LHTLLAISFFSERKY. The helical transmembrane segment at 255-276 threads the bilayer; it reads LQAFVLLGWGSPAIFVALWAIT. At 277–291 the chain is on the extracellular side; it reads RHFLENTGCWDINAN. A glycan (N-linked (GlcNAc...) asparagine) is linked at asparagine 291. Residues 292 to 315 traverse the membrane as a helical segment; that stretch reads ASVWWVIRGPVILSILINFIFFIN. Residues 316–340 lie on the Cytoplasmic side of the membrane; it reads ILRILMRKLRTQETRGSETNHYKRL. Residues 341–356 traverse the membrane as a helical segment; the sequence is AKSTLLLIPLFGIHYI. The Extracellular segment spans residues 357 to 367; that stretch reads VFAFSPEDAME. Residues 368–391 traverse the membrane as a helical segment; that stretch reads VQLFFELALGSFQGLVVAVLYCFL. Over 392–449 the chain is Cytoplasmic; the sequence is NGEVQLEVQKKWRQWHLQEFPLRPVAFNNSFSNATNGPTHSTKASTEQSRSIPRASII. A compositionally biased stretch (polar residues) spans 425–442; it reads ATNGPTHSTKASTEQSRS. Residues 425-449 are disordered; it reads ATNGPTHSTKASTEQSRSIPRASII.

The protein belongs to the G-protein coupled receptor 2 family. Phosphorylated on Ser and Thr residues at the cytoplasmic C-terminus by G protein-coupled receptor kinases (GRKs). Post-translationally, N-glycosylated. In the brain, expressed in the central amygdala, hippocampus, area postrema, nucleus of the tractus solitary and cerebellum.

Its subcellular location is the cell membrane. The protein localises to the basolateral cell membrane. Its function is as follows. G protein-coupled receptor activated by secretin (SCT), which is involved in different processes such as regulation of the pH of the duodenal content, food intake and water homeostasis. Ligand binding causes a conformation change that triggers signaling via guanine nucleotide-binding proteins (G proteins) and activates cAMP-dependent pathway. Upon binding to secretin, regulates the pH of the duodenum by (1) inhibiting the secretion of gastric acid from the parietal cells of the stomach and (2) stimulating the production of bicarbonate (NaHCO(3)) from the ductal cells of the pancreas. In addition to regulating the pH of the duodenal content, plays a central role in diet induced thermogenesis: acts as a non-sympathetic brown fat (BAT) activator mediating prandial thermogenesis, which consequentially induces satiation. Mechanistically, secretin released by the gut after a meal binds to secretin receptor (SCTR) in brown adipocytes, activating brown fat thermogenesis by stimulating lipolysis, which is sensed in the brain and promotes satiation. Also able to stimulate lipolysis in white adipocytes. Also plays an important role in cellular osmoregulation by regulating renal water reabsorption. Also plays a role in the central nervous system: required for synaptic plasticity. The chain is Secretin receptor from Rattus norvegicus (Rat).